A 392-amino-acid chain; its full sequence is Putative F-box protein At1g71320 (392 aa).

The 48-residue stretch at 8-55 folds into the F-box domain; sequence NPKTIFIPDDIAEGIFHHLPIKSLARFKVLSKKWTSMIESTYFSHKRL.

The protein is Putative F-box protein At1g71320 of Arabidopsis thaliana (Mouse-ear cress).